Here is a 111-residue protein sequence, read N- to C-terminus: Large ribosomal subunit protein bL21 (111 aa).

Belongs to the bacterial ribosomal protein bL21 family. As to quaternary structure, part of the 50S ribosomal subunit. Contacts protein L20.

This protein binds to 23S rRNA in the presence of protein L20. This Thermosynechococcus vestitus (strain NIES-2133 / IAM M-273 / BP-1) protein is Large ribosomal subunit protein bL21.